The following is a 433-amino-acid chain: Succinate--CoA ligase [ADP-forming] subunit beta, mitochondrial (433 aa).

The N-terminal 23 residues, 1 to 23 (MLTRSVLRKAPRAFSPFLQKRNL), are a transit peptide targeting the mitochondrion. Residues 31 to 273 (HDILRKFGVD…ISQEDPDEAR (243 aa)) enclose the ATP-grasp domain. Residues Lys68, 75–77 (GRG), and Glu136 each bind ATP. Mg(2+) contacts are provided by Asn228 and Asp242. Substrate-binding positions include Asn293 and 350-352 (GIV).

The protein belongs to the succinate/malate CoA ligase beta subunit family. In terms of assembly, heterodimer of an alpha and a beta subunit. Mg(2+) serves as cofactor.

It localises to the mitochondrion. It carries out the reaction succinate + ATP + CoA = succinyl-CoA + ADP + phosphate. Its pathway is carbohydrate metabolism; tricarboxylic acid cycle; succinate from succinyl-CoA (ligase route): step 1/1. Its function is as follows. Succinyl-CoA synthetase functions in the citric acid cycle (TCA), coupling the hydrolysis of succinyl-CoA to the synthesis of ATP and thus represents the only step of substrate-level phosphorylation in the TCA. The beta subunit provides nucleotide specificity of the enzyme and binds the substrate succinate, while the binding sites for coenzyme A and phosphate are found in the alpha subunit. This is Succinate--CoA ligase [ADP-forming] subunit beta, mitochondrial from Schizosaccharomyces pombe (strain 972 / ATCC 24843) (Fission yeast).